Reading from the N-terminus, the 180-residue chain is ATP-dependent protease subunit HslV (180 aa).

Thr-2 is an active-site residue. 3 residues coordinate Na(+): Gly-157, Cys-160, and Thr-163.

It belongs to the peptidase T1B family. HslV subfamily. As to quaternary structure, a double ring-shaped homohexamer of HslV is capped on each side by a ring-shaped HslU homohexamer. The assembly of the HslU/HslV complex is dependent on binding of ATP.

Its subcellular location is the cytoplasm. It catalyses the reaction ATP-dependent cleavage of peptide bonds with broad specificity.. Its activity is regulated as follows. Allosterically activated by HslU binding. Functionally, protease subunit of a proteasome-like degradation complex believed to be a general protein degrading machinery. The chain is ATP-dependent protease subunit HslV from Tolumonas auensis (strain DSM 9187 / NBRC 110442 / TA 4).